A 210-amino-acid chain; its full sequence is Acetoin utilization protein AcuA (210 aa).

In terms of domain architecture, N-acetyltransferase spans 19–189 (VLIEGPISPE…ANCLMARIGK (171 aa)).

Belongs to the acetyltransferase family. As to quaternary structure, monomer.

It functions in the pathway ketone degradation; acetoin degradation. In terms of biological role, part of the acuABC operon, which is possibly involved in the breakdown of acetoin and butanediol. Acts as an acetyltransferase inactivating acetyl-CoA synthetase AcsA via acetylation at a Lys residue. In Bacillus licheniformis (strain ATCC 14580 / DSM 13 / JCM 2505 / CCUG 7422 / NBRC 12200 / NCIMB 9375 / NCTC 10341 / NRRL NRS-1264 / Gibson 46), this protein is Acetoin utilization protein AcuA.